We begin with the raw amino-acid sequence, 1313 residues long: Angiotensin-converting enzyme (1313 aa).

Positions M1 to A35 are cleaved as a signal peptide. Over L36–Q1265 the chain is Extracellular. N44, N60, N80, N117, N152, and N166 each carry an N-linked (GlcNAc...) asparagine glycan. Peptidase M2 domains lie at S46–P630 and E649–P1228. C163 and C171 form a disulfide bridge. Y237 is a binding site for chloride. N-linked (GlcNAc...) asparagine glycosylation occurs at N324. C365 and C383 are disulfide-bonded. H396 is a binding site for Zn(2+). E397 acts as the Proton acceptor 1 in catalysis. Residues H400 and E424 each contribute to the Zn(2+) site. The N-linked (GlcNAc...) asparagine glycan is linked to N515. The active-site Proton donor 1 is H526. Residue R535 coordinates chloride. Cysteines 551 and 563 form a disulfide. N-linked (GlcNAc...) asparagine glycans are attached at residues N683, N701, N720, and N766. A disulfide bridge connects residues C763 and C769. Residues R797 and Y835 each coordinate chloride. An N-linked (GlcNAc...) asparagine glycan is attached at N948. Residues C963 and C981 are joined by a disulfide bond. Position 994 (H994) interacts with Zn(2+). Residue E995 is the Proton acceptor 2 of the active site. Residues H998 and E1022 each coordinate Zn(2+). Residues W1096 and R1100 each coordinate chloride. H1124 functions as the Proton donor 2 in the catalytic mechanism. Residue R1133 coordinates chloride. C1149 and C1161 form a disulfide bridge. N1197 carries an N-linked (GlcNAc...) asparagine glycan. The segment at H1221–R1262 is juxtamembrane stalk. The helical transmembrane segment at W1266–L1282 threads the bilayer. Residues A1283–S1313 are Cytoplasmic-facing. A Phosphoserine modification is found at S1306.

This sequence belongs to the peptidase M2 family. As to quaternary structure, monomer and homodimer; homodimerizes following binding to an inhibitor. Interacts with calmodulin (CALM1, CALM2 or CALM3); interaction takes place in the cytoplasmic region and regulates phosphorylation and proteolytic cleavage. Zn(2+) serves as cofactor. Chloride is required as a cofactor. Post-translationally, produced following proteolytic cleavage by secretase enzymes that cleave the transmembrane form in the juxtamembrane stalk region upstream of the transmembrane region. Cleavage can take place at different sites of the juxtamembrane stalk region. Phosphorylated by CK2 on Ser-1306; which allows membrane retention. Phosphorylated on tyrosine residues on its extracellular part, promoting cleavage by secretase enzymes and formation of the soluble form (Angiotensin-converting enzyme, soluble form). In terms of tissue distribution, expressed in brain, kidney, lung, skeletal muscle and heart. Testis-specific isoform is expressed in spermatocytes, adult testis.

It localises to the cell membrane. The protein resides in the cytoplasm. It is found in the secreted. It carries out the reaction Release of a C-terminal dipeptide, oligopeptide-|-Xaa-Yaa, when Xaa is not Pro, and Yaa is neither Asp nor Glu. Thus, conversion of angiotensin I to angiotensin II, with increase in vasoconstrictor activity, but no action on angiotensin II.. The catalysed reaction is angiotensin I + H2O = L-histidyl-L-leucine + angiotensin II. The enzyme catalyses bradykinin + H2O = L-Phe-L-Arg + bradykinin(1-7). It catalyses the reaction substance P + H2O = substance P(1-9) + L-Leu-L-Met-NH2. It carries out the reaction substance P + H2O = substance P(1-8) + Gly-L-Leu-L-Met-NH2. The catalysed reaction is substance P + H2O = L-Phe-L-Phe-Gly-L-Leu-L-Met-NH2 + substance P(1-6). The enzyme catalyses neurotensin + H2O = neurotensin(1-11) + L-isoleucyl-L-leucine. It catalyses the reaction goralatide + H2O = N-acetyl-L-seryl-L-aspartate + L-lysyl-L-proline. It carries out the reaction Met-enkephalin + H2O = L-phenylalanyl-L-methionine + L-tyrosylglycylglycine. The catalysed reaction is Leu-enkephalin + H2O = L-tyrosylglycylglycine + L-phenylalanyl-L-leucine. The enzyme catalyses Met-enkephalin-Arg-Phe + H2O = L-arginyl-L-phenylalanine + Met-enkephalin. The dipeptidyl carboxypeptidase activity is strongly activated by chloride. The dipeptidyl carboxypeptidase activity is specifically inhibited by lisinopril, captopril and enalaprilat. Its activity is regulated as follows. Strongly inhibited by lisinopril and captopril. Dipeptidyl carboxypeptidase that removes dipeptides from the C-terminus of a variety of circulating hormones, such as angiotensin I, bradykinin or enkephalins, thereby playing a key role in the regulation of blood pressure, electrolyte homeostasis or synaptic plasticity. Composed of two similar catalytic domains, each possessing a functional active site, with different selectivity for substrates. Plays a major role in the angiotensin-renin system that regulates blood pressure and sodium retention by the kidney by converting angiotensin I to angiotensin II, resulting in an increase of the vasoconstrictor activity of angiotensin. Also able to inactivate bradykinin, a potent vasodilator, and therefore enhance the blood pressure response. Acts as a regulator of synaptic transmission by mediating cleavage of neuropeptide hormones, such as substance P, neurotensin or enkephalins. Catalyzes degradation of different enkephalin neuropeptides (Met-enkephalin, Leu-enkephalin, Met-enkephalin-Arg-Phe and possibly Met-enkephalin-Arg-Gly-Leu). Acts as a regulator of synaptic plasticity in the nucleus accumbens of the brain by mediating cleavage of Met-enkephalin-Arg-Phe, a strong ligand of Mu-type opioid receptor OPRM1, into Met-enkephalin. Met-enkephalin-Arg-Phe cleavage by ACE decreases activation of OPRM1, leading to long-term synaptic potentiation of glutamate release. Also acts as a regulator of hematopoietic stem cell differentiation by mediating degradation of hemoregulatory peptide N-acetyl-SDKP (AcSDKP). Acts as a regulator of cannabinoid signaling pathway by mediating degradation of hemopressin, an antagonist peptide of the cannabinoid receptor CNR1. Involved in amyloid-beta metabolism by catalyzing degradation of Amyloid-beta protein 40 and Amyloid-beta protein 42 peptides, thereby preventing plaque formation. Catalyzes cleavage of cholecystokinin (maturation of Cholecystokinin-8 and Cholecystokinin-5) and Gonadoliberin-1 (both maturation and degradation) hormones. Degradation of hemoregulatory peptide N-acetyl-SDKP (AcSDKP) and amyloid-beta proteins is mediated by the N-terminal catalytic domain, while angiotensin I and cholecystokinin cleavage is mediated by the C-terminal catalytic region. Functionally, soluble form that is released in blood plasma and other body fluids following proteolytic cleavage in the juxtamembrane stalk region. Its function is as follows. Isoform produced by alternative promoter usage that is specifically expressed in spermatocytes and adult testis, and which is required for male fertility. In contrast to somatic isoforms, only contains one catalytic domain. Acts as a dipeptidyl carboxypeptidase that removes dipeptides from the C-terminus of substrates. The identity of substrates that are needed for male fertility is unknown. May also have a glycosidase activity which releases GPI-anchored proteins from the membrane by cleaving the mannose linkage in the GPI moiety. The GPIase activity was reported to be essential for the egg-binding ability of the sperm. This activity is however unclear and has been challenged by other groups, suggesting that it may be indirect. This Rattus norvegicus (Rat) protein is Angiotensin-converting enzyme.